Here is a 419-residue protein sequence, read N- to C-terminus: Serine hydroxymethyltransferase (419 aa).

(6S)-5,6,7,8-tetrahydrofolate is bound by residues Leu-121 and 125–127 (GHL). Lys-230 is subject to N6-(pyridoxal phosphate)lysine. 355–357 (SPF) contributes to the (6S)-5,6,7,8-tetrahydrofolate binding site.

This sequence belongs to the SHMT family. As to quaternary structure, homodimer. The cofactor is pyridoxal 5'-phosphate.

It localises to the cytoplasm. It carries out the reaction (6R)-5,10-methylene-5,6,7,8-tetrahydrofolate + glycine + H2O = (6S)-5,6,7,8-tetrahydrofolate + L-serine. The protein operates within one-carbon metabolism; tetrahydrofolate interconversion. It participates in amino-acid biosynthesis; glycine biosynthesis; glycine from L-serine: step 1/1. Catalyzes the reversible interconversion of serine and glycine with tetrahydrofolate (THF) serving as the one-carbon carrier. This reaction serves as the major source of one-carbon groups required for the biosynthesis of purines, thymidylate, methionine, and other important biomolecules. Also exhibits THF-independent aldolase activity toward beta-hydroxyamino acids, producing glycine and aldehydes, via a retro-aldol mechanism. This is Serine hydroxymethyltransferase from Streptococcus equi subsp. zooepidemicus (strain MGCS10565).